The primary structure comprises 340 residues: Protein-arginine kinase (340 aa).

The region spanning 21-242 (VVLSSRIRLA…EQIIMQERVA (222 aa)) is the Phosphagen kinase C-terminal domain. ATP is bound by residues 24-28 (SSRIR), histidine 79, arginine 113, 164-168 (RASVM), and 195-200 (RGIYGE).

Belongs to the ATP:guanido phosphotransferase family.

The catalysed reaction is L-arginyl-[protein] + ATP = N(omega)-phospho-L-arginyl-[protein] + ADP + H(+). Functionally, catalyzes the specific phosphorylation of arginine residues in proteins. This chain is Protein-arginine kinase, found in Listeria innocua serovar 6a (strain ATCC BAA-680 / CLIP 11262).